A 291-amino-acid polypeptide reads, in one-letter code: Lys-63-specific deubiquitinase BRCC36 (291 aa).

Ala2 is modified (N-acetylalanine). The 168-residue stretch at 12-179 (VHLESDAFLV…YTCFQSIQAQ (168 aa)) folds into the MPN domain. 3 residues coordinate Zn(2+): His122, His124, and Asp135. A JAMM motif motif is present at residues 122–135 (HSHPHITVWPSHVD). Ser233 is modified (phosphoserine).

It belongs to the peptidase M67A family. BRCC36 subfamily. As to quaternary structure, component of the ARISC complex, at least composed of UIMC1/RAP80, ABRAXAS1, BRCC3/BRCC36, BABAM2 and BABAM1/NBA1. Component of the BRCA1-A complex, at least composed of BRCA1, BARD1, UIMC1/RAP80, ABRAXAS1, BRCC3/BRCC36, BABAM2 and BABAM1/NBA1. In the BRCA1-A complex, interacts directly with ABRAXAS1 and BABAM2. Component of the BRISC complex, at least composed of ABRAXAS2, BRCC3/BRCC36, BABAM2 and BABAM1/NBA1. Identified in a complex with SHMT2 and the other subunits of the BRISC complex. In the BRISC complex, interacts directly with ABRAXAS2. Identified in a complex with ABRAXAS2 and NUMA1. The BRISC complex interacts with the CSN complex. Component of the BRCA1/BRCA2 containing complex (BRCC), which also contains BRCA1, BRCA2, BARD1, BABAM2 and RAD51. BRCC is a ubiquitin E3 ligase complex that enhances cellular survival following DNA damage. Interacts with BRCA1. Binds polyubiquitin. Interacts with PWWP2B. Interacts with HDAC1; this interaction is enhanced in the presence of PWWP2B. The cofactor is Zn(2+).

The protein resides in the nucleus. The protein localises to the cytoplasm. It localises to the cytoskeleton. Its subcellular location is the spindle pole. Metalloprotease that specifically cleaves 'Lys-63'-linked polyubiquitin chains. Does not have activity toward 'Lys-48'-linked polyubiquitin chains. Component of the BRCA1-A complex, a complex that specifically recognizes 'Lys-63'-linked ubiquitinated histones H2A and H2AX at DNA lesions sites, leading to target the BRCA1-BARD1 heterodimer to sites of DNA damage at double-strand breaks (DSBs). In the BRCA1-A complex, it specifically removes 'Lys-63'-linked ubiquitin on histones H2A and H2AX, antagonizing the RNF8-dependent ubiquitination at double-strand breaks (DSBs). Catalytic subunit of the BRISC complex, a multiprotein complex that specifically cleaves 'Lys-63'-linked ubiquitin in various substrates. Mediates the specific 'Lys-63'-specific deubiquitination associated with the COP9 signalosome complex (CSN), via the interaction of the BRISC complex with the CSN complex. The BRISC complex is required for normal mitotic spindle assembly and microtubule attachment to kinetochores via its role in deubiquitinating NUMA1. Plays a role in interferon signaling via its role in the deubiquitination of the interferon receptor IFNAR1; deubiquitination increases IFNAR1 activity by enhancing its stability and cell surface expression. Acts as a regulator of the NLRP3 inflammasome by mediating deubiquitination of NLRP3, leading to NLRP3 inflammasome assembly. Down-regulates the response to bacterial lipopolysaccharide (LPS) via its role in IFNAR1 deubiquitination. Deubiquitinates HDAC1 and PWWP2B leading to their stabilization. This Mus musculus (Mouse) protein is Lys-63-specific deubiquitinase BRCC36 (Brcc3).